A 601-amino-acid chain; its full sequence is Elongation factor 4 (601 aa).

The tr-type G domain maps to 7–189 (SNIRNFSIVA…AIVHRLPPPQ (183 aa)). Residues 19–24 (DHGKST) and 136–139 (NKVD) contribute to the GTP site.

Belongs to the TRAFAC class translation factor GTPase superfamily. Classic translation factor GTPase family. LepA subfamily.

The protein localises to the cell inner membrane. The catalysed reaction is GTP + H2O = GDP + phosphate + H(+). Its function is as follows. Required for accurate and efficient protein synthesis under certain stress conditions. May act as a fidelity factor of the translation reaction, by catalyzing a one-codon backward translocation of tRNAs on improperly translocated ribosomes. Back-translocation proceeds from a post-translocation (POST) complex to a pre-translocation (PRE) complex, thus giving elongation factor G a second chance to translocate the tRNAs correctly. Binds to ribosomes in a GTP-dependent manner. This Rhodopseudomonas palustris (strain BisB18) protein is Elongation factor 4.